A 196-amino-acid chain; its full sequence is Ribosomal RNA large subunit methyltransferase E (196 aa).

S-adenosyl-L-methionine-binding residues include Gly-50, Trp-52, Asp-70, Asp-87, and Asp-112. Residue Lys-152 is the Proton acceptor of the active site.

Belongs to the class I-like SAM-binding methyltransferase superfamily. RNA methyltransferase RlmE family.

Its subcellular location is the cytoplasm. It catalyses the reaction uridine(2552) in 23S rRNA + S-adenosyl-L-methionine = 2'-O-methyluridine(2552) in 23S rRNA + S-adenosyl-L-homocysteine + H(+). Its function is as follows. Specifically methylates the uridine in position 2552 of 23S rRNA at the 2'-O position of the ribose in the fully assembled 50S ribosomal subunit. This is Ribosomal RNA large subunit methyltransferase E from Bdellovibrio bacteriovorus (strain ATCC 15356 / DSM 50701 / NCIMB 9529 / HD100).